Consider the following 206-residue polypeptide: Large ribosomal subunit protein uL4 (206 aa).

The protein belongs to the universal ribosomal protein uL4 family. As to quaternary structure, part of the 50S ribosomal subunit.

In terms of biological role, one of the primary rRNA binding proteins, this protein initially binds near the 5'-end of the 23S rRNA. It is important during the early stages of 50S assembly. It makes multiple contacts with different domains of the 23S rRNA in the assembled 50S subunit and ribosome. Forms part of the polypeptide exit tunnel. The protein is Large ribosomal subunit protein uL4 of Nitratidesulfovibrio vulgaris (strain ATCC 29579 / DSM 644 / CCUG 34227 / NCIMB 8303 / VKM B-1760 / Hildenborough) (Desulfovibrio vulgaris).